We begin with the raw amino-acid sequence, 1087 residues long: Exportin-7-A (1087 aa).

An Importin N-terminal domain is found at Ala-30–Thr-96.

Belongs to the exportin family. In terms of tissue distribution, expressed in oocytes (at protein level).

It is found in the cytoplasm. It localises to the nucleus. In terms of biological role, mediates the nuclear export of proteins (cargos) with broad substrate specificity. The sequence is that of Exportin-7-A (xpo7-a) from Xenopus laevis (African clawed frog).